We begin with the raw amino-acid sequence, 184 residues long: Holliday junction branch migration complex subunit RuvA (184 aa).

The tract at residues 1–62 (MIVGLVGEVL…EDSESLYGFV (62 aa)) is domain I. The interval 63–134 (DINEKKMFDR…ELGEFDISES (72 aa)) is domain II. Positions 134–135 (SN) are flexible linker. The segment at 136–184 (VTSSAFQEASMALQSLGFKKEQIQKALQECTATDTASLVKEALKKIQKL) is domain III.

It belongs to the RuvA family. As to quaternary structure, homotetramer. Forms an RuvA(8)-RuvB(12)-Holliday junction (HJ) complex. HJ DNA is sandwiched between 2 RuvA tetramers; dsDNA enters through RuvA and exits via RuvB. An RuvB hexamer assembles on each DNA strand where it exits the tetramer. Each RuvB hexamer is contacted by two RuvA subunits (via domain III) on 2 adjacent RuvB subunits; this complex drives branch migration. In the full resolvosome a probable DNA-RuvA(4)-RuvB(12)-RuvC(2) complex forms which resolves the HJ.

Its subcellular location is the cytoplasm. The RuvA-RuvB-RuvC complex processes Holliday junction (HJ) DNA during genetic recombination and DNA repair, while the RuvA-RuvB complex plays an important role in the rescue of blocked DNA replication forks via replication fork reversal (RFR). RuvA specifically binds to HJ cruciform DNA, conferring on it an open structure. The RuvB hexamer acts as an ATP-dependent pump, pulling dsDNA into and through the RuvAB complex. HJ branch migration allows RuvC to scan DNA until it finds its consensus sequence, where it cleaves and resolves the cruciform DNA. The polypeptide is Holliday junction branch migration complex subunit RuvA (Nitratiruptor sp. (strain SB155-2)).